We begin with the raw amino-acid sequence, 573 residues long: Proline--tRNA ligase (573 aa).

It belongs to the class-II aminoacyl-tRNA synthetase family. ProS type 1 subfamily. Homodimer.

It is found in the cytoplasm. It catalyses the reaction tRNA(Pro) + L-proline + ATP = L-prolyl-tRNA(Pro) + AMP + diphosphate. Catalyzes the attachment of proline to tRNA(Pro) in a two-step reaction: proline is first activated by ATP to form Pro-AMP and then transferred to the acceptor end of tRNA(Pro). As ProRS can inadvertently accommodate and process non-cognate amino acids such as alanine and cysteine, to avoid such errors it has two additional distinct editing activities against alanine. One activity is designated as 'pretransfer' editing and involves the tRNA(Pro)-independent hydrolysis of activated Ala-AMP. The other activity is designated 'posttransfer' editing and involves deacylation of mischarged Ala-tRNA(Pro). The misacylated Cys-tRNA(Pro) is not edited by ProRS. In Chromohalobacter salexigens (strain ATCC BAA-138 / DSM 3043 / CIP 106854 / NCIMB 13768 / 1H11), this protein is Proline--tRNA ligase.